A 332-amino-acid chain; its full sequence is Ribosomal RNA small subunit methyltransferase C (332 aa).

This sequence belongs to the methyltransferase superfamily. RsmC family. As to quaternary structure, monomer.

It is found in the cytoplasm. The catalysed reaction is guanosine(1207) in 16S rRNA + S-adenosyl-L-methionine = N(2)-methylguanosine(1207) in 16S rRNA + S-adenosyl-L-homocysteine + H(+). Functionally, specifically methylates the guanine in position 1207 of 16S rRNA in the 30S particle. This is Ribosomal RNA small subunit methyltransferase C from Pseudomonas putida (strain GB-1).